Consider the following 309-residue polypeptide: Vomeronasal type-1 receptor 52 (309 aa).

The Extracellular segment spans residues 1-19; that stretch reads MNKDHTLYCSVYIRNAFFS. Residues 20-40 form a helical membrane-spanning segment; it reads EIGIGISANSCLLLFHTFMFI. The Cytoplasmic portion of the chain corresponds to 41-49; that stretch reads RGHRPRLTD. The chain crosses the membrane as a helical span at residues 50 to 70; sequence LPIGFVALIHLVMLLLAAYIT. Residues 71–93 lie on the Extracellular side of the membrane; that stretch reads EDFFMSSGGWDDITCKLVIFLHR. A disulfide bridge connects residues C85 and C172. Residues 94–114 traverse the membrane as a helical segment; that stretch reads FFRSLSVCATCLLSVFQAIIL. Over 115–134 the chain is Cytoplasmic; it reads CPQSSHLAKLKQNSPHQLSY. A helical transmembrane segment spans residues 135-155; that stretch reads FFIFLSIFYTSISSHILIAAI. Residues 156–187 are Extracellular-facing; sequence PTQNITFVNLIYITNSCSFLPLSSSMQHTFST. An N-linked (GlcNAc...) asparagine glycan is attached at N159. The helical transmembrane segment at 188–208 threads the bilayer; the sequence is LLAFRNVFVIGLMGLSTCYMA. Residues 209-238 lie on the Cytoplasmic side of the membrane; sequence TLLCRHKTRSQRLQNSKLSPKATPEQRALR. A helical transmembrane segment spans residues 239–259; sequence TILMLMSFFLLMSTFDSIISY. Residues 260–268 lie on the Extracellular side of the membrane; it reads SRTILQGNP. Residues 269–289 traverse the membrane as a helical segment; the sequence is LPFCFQILVAHSYAAVSPLLV. At 290-309 the chain is on the cytoplasmic side; that stretch reads LSNEKRITNLLISMYEKIVL.

This sequence belongs to the G-protein coupled receptor 1 family.

The protein resides in the cell membrane. Putative pheromone receptor implicated in the regulation of social and reproductive behavior. In Mus musculus (Mouse), this protein is Vomeronasal type-1 receptor 52 (Vmn1r52).